The following is a 152-amino-acid chain: Large ribosomal subunit protein bL9 (152 aa).

This sequence belongs to the bacterial ribosomal protein bL9 family.

Functionally, binds to the 23S rRNA. The protein is Large ribosomal subunit protein bL9 of Streptococcus thermophilus (strain ATCC BAA-491 / LMD-9).